The following is a 278-amino-acid chain: MESVSHLVSNGQSVLLVWSQGGQLDTLANFTSSLRERVGTNGTVAVENINRLSQSSYGSSTFDVALSNVVSSYCCKHTSEQLAQILKMLKPDCKCLLRDTSPSDQIRSELILAGFTNISIVAEDNATVKVNARKPNFEIGSSAALPFANKISLGGNSKMETAKMWTLSSQDFVDDDIDIIDENTLIEEDDFLKPDPSSLRSQECDSAKKKRKACKNCSCGLAEEIESEKKTNGNPVSSCGSCYLGDAFRCSSCPYLGMPAFKPGEKVALPSRLLQADV.

The tract at residues M1–F147 is N-terminal SAM-like domain. A linker region spans residues F147–F191. [2Fe-2S] cluster is bound by residues C204, C214, C217, and C219. Residues C204–C219 form a fe-S binding site A region. Positions 239, 242, 250, and 253 each coordinate [4Fe-4S] cluster. 2 consecutive short sequence motifs (cx2C motif) follow at residues C239–C242 and C250–C253. A fe-S binding site B region spans residues C239–C253.

It belongs to the anamorsin family. In terms of assembly, monomer. [2Fe-2S] cluster is required as a cofactor. The cofactor is [4Fe-4S] cluster.

Its subcellular location is the cytoplasm. The protein resides in the mitochondrion intermembrane space. Functionally, component of the cytosolic iron-sulfur (Fe-S) protein assembly (CIA) machinery. Required for the maturation of extramitochondrial Fe-S proteins. Part of an electron transfer chain functioning in an early step of cytosolic Fe-S biogenesis, facilitating the de novo assembly of a [4Fe-4S] cluster on the cytosolic Fe-S scaffold complex. Electrons are transferred from NADPH via a FAD- and FMN-containing diflavin oxidoreductase. Together with the diflavin oxidoreductase, also required for the assembly of the diferric tyrosyl radical cofactor of ribonucleotide reductase (RNR), probably by providing electrons for reduction during radical cofactor maturation in the catalytic small subunit. The polypeptide is Anamorsin homolog (Trichoplax adhaerens (Trichoplax reptans)).